The sequence spans 91 residues: Sec-independent protein translocase protein TatA (91 aa).

The chain crosses the membrane as a helical span at residues 1-21 (MGIFDWKHWIVILIVVVLVFG). Residues 42 to 91 (AMHDDDKPAEQPAPQPQQAQPAPQGSPLNQPHTIDAQAHKVDEPIRKDQV) are disordered. Residues 51 to 64 (EQPAPQPQQAQPAP) show a composition bias toward low complexity. Positions 78–91 (QAHKVDEPIRKDQV) are enriched in basic and acidic residues.

The protein belongs to the TatA/E family. As to quaternary structure, the Tat system comprises two distinct complexes: a TatABC complex, containing multiple copies of TatA, TatB and TatC subunits, and a separate TatA complex, containing only TatA subunits. Substrates initially bind to the TatABC complex, which probably triggers association of the separate TatA complex to form the active translocon.

The protein localises to the cell inner membrane. Its function is as follows. Part of the twin-arginine translocation (Tat) system that transports large folded proteins containing a characteristic twin-arginine motif in their signal peptide across membranes. TatA could form the protein-conducting channel of the Tat system. The polypeptide is Sec-independent protein translocase protein TatA (Pseudomonas syringae pv. tomato (strain ATCC BAA-871 / DC3000)).